The following is a 397-amino-acid chain: Alpha-lytic protease (397 aa).

The signal sequence occupies residues 1-24; that stretch reads MYVSNHRSRRVARVSVSCLVAALA. The propeptide occupies 25–199; the sequence is AMSCGAALAA…ESSPGKLQTT (175 aa). An intrachain disulfide couples cysteine 216 to cysteine 236. Catalysis depends on charge relay system residues histidine 235 and aspartate 262. Intrachain disulfides connect cysteine 300/cysteine 310 and cysteine 336/cysteine 369. The Charge relay system role is filled by serine 342.

It belongs to the peptidase S1 family.

It catalyses the reaction Preferential cleavage: Ala-|-Xaa, Val-|-Xaa in bacterial cell walls, elastin and other proteins.. The sequence is that of Alpha-lytic protease (alpha-LP) from Lysobacter enzymogenes.